The primary structure comprises 605 residues: F-box/WD repeat-containing protein 1A (605 aa).

The segment at 128–177 (ASYEKEKELCVKYFEQWSESDQVEFVEHLISQMCHYQHGHINSYLKPMLQ) is homodimerization domain D. The F-box domain occupies 182–228 (TALPARGLDHIAENILSYLDAKSLCAAELVCKEWYRVTSDGMLWKKL). Positions 190–228 (DHIAENILSYLDAKSLCAAELVCKEWYRVTSDGMLWKKL) are required for down-regulation of SNAI1. WD repeat units lie at residues 301 to 338 (ETSKGVYCLQYDDQKIVSGLRDNTIKIWDKSTLECKRI), 341 to 378 (GHTGSVLCLQYDERVIITGSSDSTVRVWDVNAGEMLNT), 381 to 418 (HHCEAVLHLRFNNGMMVTCSKDRSIAVWDMASPTDITL), 424 to 461 (GHRAAVNVVDFDDKYIVSASGDRTIKVWNTSTCEFVRT), 464 to 503 (GHKRGIACLQYRDRLVVSGSSDNTIRLWDIECGACLRVLE), 505 to 541 (HEELVRCIRFDNKRIVSGAYDGKIKVWDLMAALDPRA), and 553 to 590 (EHSGRVFRLQFDEFQIVSSSHDDTILIWDFLNDPAAHA).

As to quaternary structure, homodimer. Self-associates. Component of the SCF(BTRC) complex, composed of SKP1, CUL1 and BTRC. Direct interaction with SKP1 with SKP1 occurs via the F-box domain. Interacts with phosphorylated ubiquitination substrates SMAD3 and SMAD4. Interacts with phosphorylated ubiquitination substrates CTNNB1, NFKBIA, NFKBIB, NFKBIE, NFKB1/nuclear factor NF-kappa-B p105 subunit, ATF4, CDC25A, DLG1, FBXO5 and SNAI1; the interaction requires the phosphorylation of the 2 serine residues in the substrate destruction motif D-S-G-X(2,3,4)-S. Binds UBQLN1. Interacts with CDC34 and UBE2R2. Interacts with FBXW11. Interacts with CUL4A and DDB1. Part of a SCF(BTRC)-like complex lacking CUL1, which is associated with phosphorylated NKBIA and RELA; RELA interacts directly with NFKBIA. Interacts with the phosphorylated form of GLI3. Interacts with CLU. Interacts with PER1 (phosphorylated), PER2 (phosphorylated) and PER3. Interacts with phosphorylated ubiquitination substrate CEP68. Interacts with ZC3H12A; this interaction occurs when ZC3H12A is phosphorylated in a IKBKB/IKKB-dependent manner. Interacts with HSF1; this interaction occurs during mitosis and induces HSF1 ubiquitin-dependent degradation, a process inhibited by CDC20. Interacts with NFE2L1. Interacts with INAVA. Interacts with IL10RA; this interaction leads to IL10RA ubiquitination and subsequent degradation. Interacts with REST. Interacts with KLF4; this interaction leads to KLF4 ubiquitination and subsequent degradation. Interacts with UBR2, as part of a SCF(BTRC) complex; the interaction mediates 'Lys-48'-linked ubiquitination of UBR2 and is regulated by DUSP22 in the T-cell receptor signaling pathway. In terms of processing, ubiquitinated via 'Lys-11'-linked polyubiquitin by some cullin-5-RING E3 ubiquitin-protein ligase complex (ECS complex), leading to its degradation. Deubiquitinated by OTUD5, promoting its stability. As to expression, expressed in heart, brain, liver, skeletal muscle and, most strongly, in testis.

The protein resides in the cytoplasm. It localises to the nucleus. It functions in the pathway protein modification; protein ubiquitination. In terms of biological role, substrate recognition component of a SCF (SKP1-CUL1-F-box protein) E3 ubiquitin-protein ligase complex which mediates the ubiquitination and subsequent proteasomal degradation of target proteins. Recognizes and binds to phosphorylated target proteins. SCF(BTRC) mediates the ubiquitination of phosphorylated NFKB, ATF4, CDC25A, DLG1, FBXO5, PER1, SMAD3, SMAD4, SNAI1 and probably NFKB2. SCF(BTRC) mediates the ubiquitination of CTNNB1 and participates in Wnt signaling. SCF(BTRC) mediates the ubiquitination of NFKBIA, NFKBIB and NFKBIE; the degradation frees the associated NFKB1 to translocate into the nucleus and to activate transcription. Ubiquitination of NFKBIA occurs at 'Lys-21' and 'Lys-22'. The SCF(FBXW11) complex also regulates NF-kappa-B by mediating ubiquitination of phosphorylated NFKB1: specifically ubiquitinates the p105 form of NFKB1, leading to its degradation. SCF(BTRC) mediates the ubiquitination of CEP68; this is required for centriole separation during mitosis. SCF(BTRC) mediates the ubiquitination and subsequent degradation of nuclear NFE2L1. Has an essential role in the control of the clock-dependent transcription via degradation of phosphorylated PER1 and PER2. May be involved in ubiquitination and subsequent proteasomal degradation through a DBB1-CUL4 E3 ubiquitin-protein ligase. Required for activation of NFKB-mediated transcription by IL1B, MAP3K14, MAP3K1, IKBKB and TNF. Required for proteolytic processing of GLI3. Mediates ubiquitination of REST, thereby leading to its proteasomal degradation. SCF(BTRC) mediates the ubiquitination and subsequent proteasomal degradation of KLF4; thereby negatively regulating cell pluripotency maintenance and embryogenesis. SCF(BTRC) acts as a regulator of mTORC1 signaling pathway by catalyzing ubiquitination and subsequent proteasomal degradation of phosphorylated DEPTOR, TFE3 and MITF. SCF(BTRC) directs 'Lys-48'-linked ubiquitination of UBR2 in the T-cell receptor signaling pathway. The protein is F-box/WD repeat-containing protein 1A of Mus musculus (Mouse).